Here is a 54-residue protein sequence, read N- to C-terminus: uncharacterized protein (54 aa).

A disordered region spans residues 34-54; the sequence is NNREKQKSGKLRELRRGFKTF.

This is an uncharacterized protein from Acidianus two-tailed virus (ATV).